The primary structure comprises 102 residues: Alpha-ketoglutarate dehydrogenase component 4 (102 aa).

Position 2 is an N-acetylglycine (Gly2). An N6-succinyllysine modification is found at Lys4. Positions 23–70 are disordered; it reads KFPNRRDKPKLSASEALGSAALPSHSSAISQHSKGSTSPDLLMHQGPP. Residues 33-46 show a composition bias toward low complexity; the sequence is LSASEALGSAALPS. The segment covering 47–61 has biased composition (polar residues); that stretch reads HSSAISQHSKGSTSP. 3 positions are modified to phosphoserine: Ser48, Ser60, and Ser89.

The protein belongs to the alpha-ketoglutarate dehydrogenase component 4 family. As to quaternary structure, component of the 2-oxoglutarate dehydrogenase complex (OGDHC), composed of OGDH (2-oxoglutarate dehydrogenase; also called E1 subunit), DLST (dihydrolipoamide succinyltransferase; also called E2 subunit) and DLD (dihydrolipoamide dehydrogenase; also called E3 subunit), and the assembly factor KGD4. Within OGDHC complex, interacts (via N-terminus) with E3 subunit and (via C-terminus) with E2 subunit.

It is found in the mitochondrion. In terms of biological role, molecular adapter that is necessary to form a stable 2-oxoglutarate dehydrogenase enzyme complex (OGDHC). Enables the specific recruitment of E3 subunit to E2 subunit in the 2-oxoglutarate dehydrogenase complex (OGDHC). The polypeptide is Alpha-ketoglutarate dehydrogenase component 4 (Mus musculus (Mouse)).